A 393-amino-acid chain; its full sequence is NAD(P)H-quinone oxidoreductase subunit H, chloroplastic (393 aa).

Belongs to the complex I 49 kDa subunit family. NDH is composed of at least 16 different subunits, 5 of which are encoded in the nucleus.

The protein localises to the plastid. It localises to the chloroplast thylakoid membrane. It carries out the reaction a plastoquinone + NADH + (n+1) H(+)(in) = a plastoquinol + NAD(+) + n H(+)(out). The catalysed reaction is a plastoquinone + NADPH + (n+1) H(+)(in) = a plastoquinol + NADP(+) + n H(+)(out). Functionally, NDH shuttles electrons from NAD(P)H:plastoquinone, via FMN and iron-sulfur (Fe-S) centers, to quinones in the photosynthetic chain and possibly in a chloroplast respiratory chain. The immediate electron acceptor for the enzyme in this species is believed to be plastoquinone. Couples the redox reaction to proton translocation, and thus conserves the redox energy in a proton gradient. The protein is NAD(P)H-quinone oxidoreductase subunit H, chloroplastic of Drimys granadensis.